Consider the following 159-residue polypeptide: Phosphopantetheine adenylyltransferase (159 aa).

T10 provides a ligand contact to substrate. ATP is bound by residues 10-11 and H18; that span reads TF. Substrate is bound by residues K42, L74, and R88. ATP contacts are provided by residues 89 to 91, E99, and 124 to 130; these read GLR and NSFISST.

It belongs to the bacterial CoaD family. In terms of assembly, homohexamer. The cofactor is Mg(2+).

Its subcellular location is the cytoplasm. It carries out the reaction (R)-4'-phosphopantetheine + ATP + H(+) = 3'-dephospho-CoA + diphosphate. Its pathway is cofactor biosynthesis; coenzyme A biosynthesis; CoA from (R)-pantothenate: step 4/5. Its function is as follows. Reversibly transfers an adenylyl group from ATP to 4'-phosphopantetheine, yielding dephospho-CoA (dPCoA) and pyrophosphate. This is Phosphopantetheine adenylyltransferase from Shewanella pealeana (strain ATCC 700345 / ANG-SQ1).